The primary structure comprises 450 residues: Ribulose bisphosphate carboxylase large chain (450 aa).

The residue at position 4 (K4) is an N6,N6,N6-trimethyllysine. N113 and T163 together coordinate substrate. K165 functions as the Proton acceptor in the catalytic mechanism. Residue K167 participates in substrate binding. Residues K191, D193, and E194 each coordinate Mg(2+). An N6-carboxylysine modification is found at K191. H284 functions as the Proton acceptor in the catalytic mechanism. 3 residues coordinate substrate: R285, H317, and S369.

The protein belongs to the RuBisCO large chain family. Type I subfamily. Heterohexadecamer of 8 large chains and 8 small chains; disulfide-linked. The disulfide link is formed within the large subunit homodimers. Mg(2+) serves as cofactor. The disulfide bond which can form in the large chain dimeric partners within the hexadecamer appears to be associated with oxidative stress and protein turnover.

Its subcellular location is the plastid. The protein localises to the chloroplast. The catalysed reaction is 2 (2R)-3-phosphoglycerate + 2 H(+) = D-ribulose 1,5-bisphosphate + CO2 + H2O. It carries out the reaction D-ribulose 1,5-bisphosphate + O2 = 2-phosphoglycolate + (2R)-3-phosphoglycerate + 2 H(+). Functionally, ruBisCO catalyzes two reactions: the carboxylation of D-ribulose 1,5-bisphosphate, the primary event in carbon dioxide fixation, as well as the oxidative fragmentation of the pentose substrate in the photorespiration process. Both reactions occur simultaneously and in competition at the same active site. The protein is Ribulose bisphosphate carboxylase large chain of Crassula rupestris subsp. marnieriana (Pygmyweed).